A 242-amino-acid polypeptide reads, in one-letter code: Phosphoribosylaminoimidazole-succinocarboxamide synthase (242 aa).

Belongs to the SAICAR synthetase family.

The catalysed reaction is 5-amino-1-(5-phospho-D-ribosyl)imidazole-4-carboxylate + L-aspartate + ATP = (2S)-2-[5-amino-1-(5-phospho-beta-D-ribosyl)imidazole-4-carboxamido]succinate + ADP + phosphate + 2 H(+). It participates in purine metabolism; IMP biosynthesis via de novo pathway; 5-amino-1-(5-phospho-D-ribosyl)imidazole-4-carboxamide from 5-amino-1-(5-phospho-D-ribosyl)imidazole-4-carboxylate: step 1/2. The protein is Phosphoribosylaminoimidazole-succinocarboxamide synthase of Magnetococcus marinus (strain ATCC BAA-1437 / JCM 17883 / MC-1).